The chain runs to 443 residues: Xaa-Pro dipeptidase (443 aa).

Mn(2+) contacts are provided by aspartate 246, aspartate 257, histidine 339, glutamate 384, and glutamate 423.

This sequence belongs to the peptidase M24B family. Bacterial-type prolidase subfamily. The cofactor is Mn(2+).

The enzyme catalyses Xaa-L-Pro dipeptide + H2O = an L-alpha-amino acid + L-proline. In terms of biological role, splits dipeptides with a prolyl residue in the C-terminal position. This is Xaa-Pro dipeptidase from Yersinia pestis bv. Antiqua (strain Nepal516).